The sequence spans 608 residues: UvrABC system protein C (608 aa).

The region spanning 15-93 is the GIY-YIG domain; the sequence is HQPGVYRMYN…IKQYLPKYNV (79 aa). In terms of domain architecture, UVR spans 203-238; sequence RQVIQSLVEQMEGASQALNFEKAATIRDQIQSMRRV.

Belongs to the UvrC family. Interacts with UvrB in an incision complex.

The protein resides in the cytoplasm. In terms of biological role, the UvrABC repair system catalyzes the recognition and processing of DNA lesions. UvrC both incises the 5' and 3' sides of the lesion. The N-terminal half is responsible for the 3' incision and the C-terminal half is responsible for the 5' incision. This is UvrABC system protein C from Aliivibrio salmonicida (strain LFI1238) (Vibrio salmonicida (strain LFI1238)).